A 203-amino-acid chain; its full sequence is MAGEIPDFQAEVRTGTGKGAARQARREGYVPGIVYGGGQEPLSINVKYNDLLNRLKKGRFLQTLFNLKVEGQEDVRVICRGVQRDVVKDLPTHVDFMRLRRTSRINLFIHVTFENHDQAPGLKRGGTLTVVRPEVELEVTAGDIPDHITVDLTGKQIGDVIHIQDIALPEGAVPTINRNFVIANISAPSGLRSSDNEEEAAEA.

Belongs to the bacterial ribosomal protein bL25 family. CTC subfamily. As to quaternary structure, part of the 50S ribosomal subunit; part of the 5S rRNA/L5/L18/L25 subcomplex. Contacts the 5S rRNA. Binds to the 5S rRNA independently of L5 and L18.

In terms of biological role, this is one of the proteins that binds to the 5S RNA in the ribosome where it forms part of the central protuberance. The polypeptide is Large ribosomal subunit protein bL25 (Cereibacter sphaeroides (strain ATCC 17025 / ATH 2.4.3) (Rhodobacter sphaeroides)).